A 733-amino-acid chain; its full sequence is MAGGRETCLPLIGFILICLKMVASAKSAPEIPTIDQAYSKLSNSITVEWATVPGATSYLLTAEDGDTVIETTVANSPGTVTGLKAATWYEITIRSISAAGRSQASPPKQAKTVLAAPILEVSSPSSDSILVQWEAVYMAIAFSVSIMRANGLGSIWKENTTNTSLTFTSLEAGTLYTIKAYAWNANRIPGDDSTCNQRTSPRAPANIQVSFDSGALKASFSWARAEGAFNYTVMALSDSSELTCSTTFSSCTISSLQCGTEYLISVLASNDAGSSKSSSAMTLKTVACAPGRVTIQEDPPGHLSVAWSSVDLGDYYVVFVKSDDGLEVHCNTSLTQCNFLSECGFTYFISVFVYNKAGQSPLGDIFNYTTAPCCPSDINPVLVSSDRVEIVWSPVRGAELYETKAVDGYNMVECNDTTPACTLSALECDTKYNITVYSFNEVRGSNMSCTPQFITTAPCSPEIKNVSRDAFSMINVHWRSTNDDATYTVTAQGEKGLYQCSSTGESCTMRGLPCGSVFSVTAVAETQAGRSLPSYSVPLETVPCCPTGLTVTQITQSVINVSWTIGRVAQTHVAVLESHTGQSKCHTHQNHCLLGCITCGINYTVTLKAISATGLTADCSYQSYFSGACCPLGVKLYRLGPNGIRIYWQASRGSANYSTDLYGSKGIFTCTPSAGLSFCDVTEIPCGDVYTVMVSPVAKTGLKLTFCPKKIYSVTCSGSTLGMVIYRGKRNEE.

The first 25 residues, 1 to 25, serve as a signal peptide directing secretion; the sequence is MAGGRETCLPLIGFILICLKMVASA. 8 consecutive Fibronectin type-III domains span residues 28–115, 116–202, 203–288, 289–373, 374–459, 460–544, 545–632, and 631–715; these read APEI…TVLA, APIL…TSPR, APAN…TVAC, APGR…TAPC, CPSD…TAPC, SPEI…TVPC, CPTG…CCPL, and PLGV…YSVT. The N-linked (GlcNAc...) asparagine glycan is linked to N230. The N-linked (GlcNAc...) asparagine glycan is linked to N433.

Its subcellular location is the secreted. This Homo sapiens (Human) protein is Fibronectin type III domain-containing protein 7 (FNDC7).